We begin with the raw amino-acid sequence, 261 residues long: Phosphonates import ATP-binding protein PhnC (261 aa).

One can recognise an ABC transporter domain in the interval 15–257; that stretch reads LCLENTSAVY…LERSAIPPKR (243 aa). 48–55 contacts ATP; the sequence is GPSGSGKS.

It belongs to the ABC transporter superfamily. Phosphonates importer (TC 3.A.1.9.1) family. As to quaternary structure, the complex is composed of two ATP-binding proteins (PhnC), two transmembrane proteins (PhnE) and a solute-binding protein (PhnD).

Its subcellular location is the cell inner membrane. The enzyme catalyses phosphonate(out) + ATP + H2O = phosphonate(in) + ADP + phosphate + H(+). Functionally, part of the ABC transporter complex PhnCDE involved in phosphonates import. Responsible for energy coupling to the transport system. The sequence is that of Phosphonates import ATP-binding protein PhnC from Hyphomonas neptunium (strain ATCC 15444).